A 30-amino-acid polypeptide reads, in one-letter code: Bowman-Birk type proteinase inhibitor 3 (30 aa).

Intrachain disulfides connect C9-C24 and C14-C22.

Functionally, inhibits trypsin (IC(50)=4.90 nM) and, to a lesser extent, alpha-chymotrypsin (IC(50)=1.87 uM). The sequence is that of Bowman-Birk type proteinase inhibitor 3 from Lathyrus sativus (White vetchling).